The following is a 271-amino-acid chain: Indole-3-glycerol phosphate synthase (271 aa).

The protein belongs to the TrpC family.

The catalysed reaction is 1-(2-carboxyphenylamino)-1-deoxy-D-ribulose 5-phosphate + H(+) = (1S,2R)-1-C-(indol-3-yl)glycerol 3-phosphate + CO2 + H2O. Its pathway is amino-acid biosynthesis; L-tryptophan biosynthesis; L-tryptophan from chorismate: step 4/5. In Haloarcula marismortui (strain ATCC 43049 / DSM 3752 / JCM 8966 / VKM B-1809) (Halobacterium marismortui), this protein is Indole-3-glycerol phosphate synthase.